The chain runs to 302 residues: Porphobilinogen deaminase (302 aa).

Cysteine 234 is subject to S-(dipyrrolylmethanemethyl)cysteine.

It belongs to the HMBS family. As to quaternary structure, monomer. Dipyrromethane serves as cofactor.

It catalyses the reaction 4 porphobilinogen + H2O = hydroxymethylbilane + 4 NH4(+). It participates in porphyrin-containing compound metabolism; protoporphyrin-IX biosynthesis; coproporphyrinogen-III from 5-aminolevulinate: step 2/4. In terms of biological role, tetrapolymerization of the monopyrrole PBG into the hydroxymethylbilane pre-uroporphyrinogen in several discrete steps. This is Porphobilinogen deaminase from Corynebacterium glutamicum (strain R).